The following is a 149-amino-acid chain: Endoribonuclease YbeY (149 aa).

Zn(2+) contacts are provided by His-116, His-120, and His-126.

The protein belongs to the endoribonuclease YbeY family. Zn(2+) serves as cofactor.

Its subcellular location is the cytoplasm. Functionally, single strand-specific metallo-endoribonuclease involved in late-stage 70S ribosome quality control and in maturation of the 3' terminus of the 16S rRNA. In Nocardioides sp. (strain ATCC BAA-499 / JS614), this protein is Endoribonuclease YbeY.